Reading from the N-terminus, the 65-residue chain is Sec-independent protein translocase protein TatA (65 aa).

Residues 1-21 (MFGLGGQELVLILLIILLLFG) form a helical membrane-spanning segment.

This sequence belongs to the TatA/E family. As to quaternary structure, forms a complex with TatC.

The protein localises to the cell inner membrane. In terms of biological role, part of the twin-arginine translocation (Tat) system that transports large folded proteins containing a characteristic twin-arginine motif in their signal peptide across membranes. TatA could form the protein-conducting channel of the Tat system. The sequence is that of Sec-independent protein translocase protein TatA from Chlorobium phaeobacteroides (strain DSM 266 / SMG 266 / 2430).